The following is a 154-amino-acid chain: Superoxide dismutase [Cu-Zn] (154 aa).

His-47, His-49, and His-64 together coordinate Cu cation. Residues Cys-58 and Cys-147 are joined by a disulfide bond. Zn(2+)-binding residues include His-64, His-72, His-81, and Asp-84. His-121 provides a ligand contact to Cu cation. A compositionally biased stretch (basic and acidic residues) spans 124-137 (TDDLGRGDSEESKK). Positions 124–144 (TDDLGRGDSEESKKTGNAGAR) are disordered. Position 144 (Arg-144) interacts with substrate.

It belongs to the Cu-Zn superoxide dismutase family. As to quaternary structure, homodimer. Requires Cu cation as cofactor. It depends on Zn(2+) as a cofactor.

It is found in the cytoplasm. It carries out the reaction 2 superoxide + 2 H(+) = H2O2 + O2. Its function is as follows. Destroys radicals which are normally produced within the cells and which are toxic to biological systems. The sequence is that of Superoxide dismutase [Cu-Zn] (sodA) from Emericella nidulans (strain FGSC A4 / ATCC 38163 / CBS 112.46 / NRRL 194 / M139) (Aspergillus nidulans).